Reading from the N-terminus, the 147-residue chain is Protein phosphatase 1 regulatory subunit 14B (147 aa).

The segment covering 1 to 15 (MADSGPAGGAALAAP) has biased composition (low complexity). The segment at 1-55 (MADSGPAGGAALAAPAPGPGSGGAGPRVYFQSPPGAAGEGPGGADDEGPVRRQGK) is disordered. An N-acetylalanine modification is found at alanine 2. The residue at position 21 (serine 21) is a Phosphoserine. Tyrosine 29 carries the phosphotyrosine modification. Serine 32 carries the post-translational modification Phosphoserine. Threonine 57 carries the post-translational modification Phosphothreonine. Residues 61 to 103 (DRKELRKRLNLEEWILEQLTRLYDCQEEEIPELEIDVDELLDM) are a coiled coil.

It belongs to the PP1 inhibitor family. Post-translationally, phosphorylated primarily on Thr-57 by PKC (in vitro). An unknown Ser is also phosphorylated by PKC (in vitro).

It localises to the cytoplasm. Its function is as follows. Inhibitor of PPP1CA. Has over 50-fold higher inhibitory activity when phosphorylated. The protein is Protein phosphatase 1 regulatory subunit 14B (PPP1R14B) of Sus scrofa (Pig).